The chain runs to 322 residues: Transaldolase (322 aa).

Lysine 136 (schiff-base intermediate with substrate) is an active-site residue.

It belongs to the transaldolase family. Type 1 subfamily. In terms of assembly, homodimer.

The protein localises to the cytoplasm. The enzyme catalyses D-sedoheptulose 7-phosphate + D-glyceraldehyde 3-phosphate = D-erythrose 4-phosphate + beta-D-fructose 6-phosphate. Its pathway is carbohydrate degradation; pentose phosphate pathway; D-glyceraldehyde 3-phosphate and beta-D-fructose 6-phosphate from D-ribose 5-phosphate and D-xylulose 5-phosphate (non-oxidative stage): step 2/3. Functionally, transaldolase is important for the balance of metabolites in the pentose-phosphate pathway. In Xanthomonas oryzae pv. oryzae (strain PXO99A), this protein is Transaldolase.